A 252-amino-acid polypeptide reads, in one-letter code: uncharacterized protein (252 aa).

The protein belongs to the LarE family.

This is an uncharacterized protein from Methanocaldococcus jannaschii (strain ATCC 43067 / DSM 2661 / JAL-1 / JCM 10045 / NBRC 100440) (Methanococcus jannaschii).